The chain runs to 283 residues: Transmembrane protein 45B (283 aa).

Helical transmembrane passes span 7-27, 55-75, 99-119, 121-141, 153-173, 187-207, and 218-238; these read HALPGTFFLLFGLWWSIKCPF, LIEGSLKIFFAFVGIMAEQFV, MYLFYGISGIADVLSVSSHHV, VGLDRLFLSLALFVEGFLFYF, IHSLLLFAVFGGSASTMMEVF, LAILQGTWFYQIGFVLYPLSG, and IMFITMCFCWHLAVALLIVGI. The disordered stretch occupies residues 261-283; sequence GLRKSTSTDSSSQKALLQESDEE. A compositionally biased stretch (polar residues) spans 264–275; that stretch reads KSTSTDSSSQKA.

The protein belongs to the TMEM45 family.

The protein resides in the membrane. The chain is Transmembrane protein 45B (tmem45b) from Danio rerio (Zebrafish).